The following is a 141-amino-acid chain: U1 small nuclear ribonucleoprotein C (141 aa).

Residues 4-36 (YYCEYCDKYLTHDSPSVRKSHTIGKVHQQAVTL) form a Matrin-type zinc finger. The interval 69–141 (LLPPNMVPGQ…SNSPPSNNDQ (73 aa)) is disordered. Pro residues predominate over residues 83–97 (MMPPGQFPFPPPPGQ). 2 stretches are compositionally biased toward low complexity: residues 100 to 110 (GGMPPHQQQPM) and 124 to 141 (QQSAQQFNSNSPPSNNDQ).

The protein belongs to the U1 small nuclear ribonucleoprotein C family. Component of the U1 snRNP. The U1 snRNP is composed of the U1 snRNA and the 7 core Sm proteins SNRPB, SNRPD1, SNRPD2, SNRPD3, SNRPE, SNRPF and SNRPG that assemble in a heptameric protein ring on the Sm site of the small nuclear RNA to form the core snRNP, and at least 3 U1 snRNP-specific proteins SNRNP70/U1-70K, SNRPA/U1-A and SNRPC/U1-C. SNRPC/U1-C interacts with U1 snRNA and the 5' splice-site region of the pre-mRNA.

Its subcellular location is the nucleus. Component of the spliceosomal U1 snRNP, which is essential for recognition of the pre-mRNA 5' splice-site and the subsequent assembly of the spliceosome. SNRPC/U1-C is directly involved in initial 5' splice-site recognition for both constitutive and regulated alternative splicing. The interaction with the 5' splice-site seems to precede base-pairing between the pre-mRNA and the U1 snRNA. Stimulates commitment or early (E) complex formation by stabilizing the base pairing of the 5' end of the U1 snRNA and the 5' splice-site region. The chain is U1 small nuclear ribonucleoprotein C from Heterostelium pallidum (strain ATCC 26659 / Pp 5 / PN500) (Cellular slime mold).